The primary structure comprises 179 residues: Large ribosomal subunit protein uL5 (179 aa).

The protein belongs to the universal ribosomal protein uL5 family. As to quaternary structure, part of the 50S ribosomal subunit; part of the 5S rRNA/L5/L18/L25 subcomplex. Contacts the 5S rRNA and the P site tRNA. Forms a bridge to the 30S subunit in the 70S ribosome.

Its function is as follows. This is one of the proteins that bind and probably mediate the attachment of the 5S RNA into the large ribosomal subunit, where it forms part of the central protuberance. In the 70S ribosome it contacts protein S13 of the 30S subunit (bridge B1b), connecting the 2 subunits; this bridge is implicated in subunit movement. Contacts the P site tRNA; the 5S rRNA and some of its associated proteins might help stabilize positioning of ribosome-bound tRNAs. The polypeptide is Large ribosomal subunit protein uL5 (Serratia proteamaculans (strain 568)).